The following is a 336-amino-acid chain: MAKLQLGYKASAEQFGPRELVEIAVAAEAAGMDSVAVSDHFQPWRVNGGHAPFSLAWMAAVGERTERVKIGTSVMTPTFRYNPAVIAQAFASMACMYPDRIFLGVGSGEALNEYATGFQGEWPEFKERFARLRESVRLMRELWSGEISNFDGDYYHTKDAVLFDIPERPVPVYIAAGGPVVAKYAGRAGDGMICTSGKGMDLYTEKLIPAAKEGAELGGRDFDALDKMIEIKISYDPDPELALENTRFWAPLSLTAEQKHSVNSSAEMERLADELPIEQVAKRWIVASDPDEAVAAVKQYTDAGLNHLVFHAPGHDQRRFLDNFQRDLEPRLRALG.

Aspartate 39 is a binding site for coenzyme F420-(gamma-Glu)n. Histidine 40 functions as the Proton donor in the catalytic mechanism. Coenzyme F420-(gamma-Glu)n is bound by residues threonine 76 and 107-108; that span reads SG. Glutamate 109 acts as the Proton acceptor in catalysis. Coenzyme F420-(gamma-Glu)n-binding positions include asparagine 112, 177 to 178, and 180 to 181; these read GG and VV. Residues threonine 195, lysine 198, lysine 259, and arginine 283 each coordinate substrate.

This sequence belongs to the F420-dependent glucose-6-phosphate dehydrogenase family. As to quaternary structure, homodimer.

The catalysed reaction is oxidized coenzyme F420-(gamma-L-Glu)(n) + D-glucose 6-phosphate + H(+) = 6-phospho-D-glucono-1,5-lactone + reduced coenzyme F420-(gamma-L-Glu)(n). Functionally, catalyzes the coenzyme F420-dependent oxidation of glucose 6-phosphate (G6P) to 6-phosphogluconolactone. The chain is F420-dependent glucose-6-phosphate dehydrogenase from Tsukamurella paurometabola (strain ATCC 8368 / DSM 20162 / CCUG 35730 / CIP 100753 / JCM 10117 / KCTC 9821 / NBRC 16120 / NCIMB 702349 / NCTC 13040) (Corynebacterium paurometabolum).